Here is a 173-residue protein sequence, read N- to C-terminus: Adenine phosphoribosyltransferase (173 aa).

The protein belongs to the purine/pyrimidine phosphoribosyltransferase family. In terms of assembly, homodimer.

The protein localises to the cytoplasm. The catalysed reaction is AMP + diphosphate = 5-phospho-alpha-D-ribose 1-diphosphate + adenine. It participates in purine metabolism; AMP biosynthesis via salvage pathway; AMP from adenine: step 1/1. Functionally, catalyzes a salvage reaction resulting in the formation of AMP, that is energically less costly than de novo synthesis. The sequence is that of Adenine phosphoribosyltransferase from Desulfitobacterium hafniense (strain Y51).